A 499-amino-acid chain; its full sequence is Glycerol kinase (499 aa).

Thr12 contacts ADP. Residues Thr12, Thr13, and Ser14 each contribute to the ATP site. Thr12 lines the sn-glycerol 3-phosphate pocket. Position 16 (Arg16) interacts with ADP. Sn-glycerol 3-phosphate-binding residues include Arg82, Glu83, Tyr134, and Asp245. Glycerol-binding residues include Arg82, Glu83, Tyr134, Asp245, and Gln246. ADP-binding residues include Thr267 and Gly311. Thr267, Gly311, Gln315, and Gly412 together coordinate ATP. Positions 412 and 416 each coordinate ADP.

Belongs to the FGGY kinase family.

The enzyme catalyses glycerol + ATP = sn-glycerol 3-phosphate + ADP + H(+). The protein operates within polyol metabolism; glycerol degradation via glycerol kinase pathway; sn-glycerol 3-phosphate from glycerol: step 1/1. Its activity is regulated as follows. Inhibited by fructose 1,6-bisphosphate (FBP). Key enzyme in the regulation of glycerol uptake and metabolism. Catalyzes the phosphorylation of glycerol to yield sn-glycerol 3-phosphate. This chain is Glycerol kinase, found in Brucella anthropi (strain ATCC 49188 / DSM 6882 / CCUG 24695 / JCM 21032 / LMG 3331 / NBRC 15819 / NCTC 12168 / Alc 37) (Ochrobactrum anthropi).